Here is a 112-residue protein sequence, read N- to C-terminus: Probable prefoldin subunit 1 (112 aa).

It belongs to the prefoldin subunit beta family. Heterohexamer of two PFD-alpha type and four PFD-beta type subunits.

Binds specifically to cytosolic chaperonin (c-CPN) and transfers target proteins to it. Binds to nascent polypeptide chain and promotes folding in an environment in which there are many competing pathways for nonnative proteins. This is Probable prefoldin subunit 1 from Schizosaccharomyces pombe (strain 972 / ATCC 24843) (Fission yeast).